The primary structure comprises 113 residues: MRIFVYGSLRHKQGNSHWMTNAQLLGDFSIDNYQLYSLGHYPGAVPGNGTVHGEVYRIDNATLAELDALRTRGGEYARQLIQTPYGSAWMYVYQRPVDGLKLIESGDWLDRDK.

This sequence belongs to the gamma-glutamylcyclotransferase family.

This is Gamma-glutamylcyclotransferase family protein YtfP (ytfP) from Escherichia coli O157:H7.